A 152-amino-acid chain; its full sequence is MAGLPRRIIKETQRLLAEPVPGIKAEPDESNARYFHVVIAGPQDSPFEGGTFKLELFLPEEYPMAAPKVRFMTKIYHPNVDKLGRICLDILKDKWSPALQIRTVLLSIQALLSAPNPDDPLANDVAEQWKSNEAQAIETARAWTRLYAMNNI.

The 147-residue stretch at 3 to 149 (GLPRRIIKET…ARAWTRLYAM (147 aa)) folds into the UBC core domain. The residue at position 82 (Lys82) is an N6-acetyllysine. Cys87 functions as the Glycyl thioester intermediate in the catalytic mechanism. A Glycyl lysine isopeptide (Lys-Gly) (interchain with G-Cter in ISG15) cross-link involves residue Lys92. Residue Ser131 is modified to Phosphoserine.

It belongs to the ubiquitin-conjugating enzyme family. As to quaternary structure, heterodimer with UBE2V2. Interacts (UBE2V2-UBE2N heterodimer) with the E3 ligase STUB1 (via the U-box domain); the complex has a specific 'Lys-63'-linked polyubiquitination activity. Interacts with RNF8 and RNF168. Interacts with RNF11. Interacts with the E3 ligases, HLTF and SHPRH; the interactions promote the 'Lys-63'-linked polyubiquitination of PCNA upon genotoxic stress and lead to DNA repair. Interacts with ARIH2 (via RING-type 2). Interacts with OTUB1; leading to inhibit E2-conjugating activity. Interacts with GPS2; leading to inhibit E2-conjugating activity. Interacts with RIGI and RNF135; involved in RIGI ubiquitination and activation. Conjugation to ISG15 impairs formation of the thioester bond with ubiquitin but not interaction with UBE2V2.

The enzyme catalyses S-ubiquitinyl-[E1 ubiquitin-activating enzyme]-L-cysteine + [E2 ubiquitin-conjugating enzyme]-L-cysteine = [E1 ubiquitin-activating enzyme]-L-cysteine + S-ubiquitinyl-[E2 ubiquitin-conjugating enzyme]-L-cysteine.. It functions in the pathway protein modification; protein ubiquitination. Activity is inhibited by binding to OTUB1, which prevents 'Lys-63'-linked polyubiquitination. Activity is inhibited by GPS2, leading to prevent 'Lys-63'-linked polyubiquitination. The UBE2V1-UBE2N and UBE2V2-UBE2N heterodimers catalyze the synthesis of non-canonical 'Lys-63'-linked polyubiquitin chains. This type of polyubiquitination does not lead to protein degradation by the proteasome. Mediates transcriptional activation of target genes. Plays a role in the control of progress through the cell cycle and differentiation. Plays a role in the error-free DNA repair pathway and contributes to the survival of cells after DNA damage. Acts together with the E3 ligases, HLTF and SHPRH, in the 'Lys-63'-linked poly-ubiquitination of PCNA upon genotoxic stress, which is required for DNA repair. Appears to act together with E3 ligase RNF5 in the 'Lys-63'-linked polyubiquitination of JKAMP thereby regulating JKAMP function by decreasing its association with components of the proteasome and ERAD. Promotes TRIM5 capsid-specific restriction activity and the UBE2V1-UBE2N heterodimer acts in concert with TRIM5 to generate 'Lys-63'-linked polyubiquitin chains which activate the MAP3K7/TAK1 complex which in turn results in the induction and expression of NF-kappa-B and MAPK-responsive inflammatory genes. Together with RNF135 and UB2V1, catalyzes the viral RNA-dependent 'Lys-63'-linked polyubiquitination of RIGI to activate the downstream signaling pathway that leads to interferon beta production. UBE2V1-UBE2N together with TRAF3IP2 E3 ubiquitin ligase mediate 'Lys-63'-linked polyubiquitination of TRAF6, a component of IL17A-mediated signaling pathway. The chain is Ubiquitin-conjugating enzyme E2 N (Ube2n) from Rattus norvegicus (Rat).